A 289-amino-acid chain; its full sequence is 4-diphosphocytidyl-2-C-methyl-D-erythritol kinase (289 aa).

Lys-10 is an active-site residue. 94–104 (PVAAGLAGGSS) is an ATP binding site. Residue Asp-136 is part of the active site.

Belongs to the GHMP kinase family. IspE subfamily.

The enzyme catalyses 4-CDP-2-C-methyl-D-erythritol + ATP = 4-CDP-2-C-methyl-D-erythritol 2-phosphate + ADP + H(+). Its pathway is isoprenoid biosynthesis; isopentenyl diphosphate biosynthesis via DXP pathway; isopentenyl diphosphate from 1-deoxy-D-xylulose 5-phosphate: step 3/6. Functionally, catalyzes the phosphorylation of the position 2 hydroxy group of 4-diphosphocytidyl-2C-methyl-D-erythritol. The chain is 4-diphosphocytidyl-2-C-methyl-D-erythritol kinase from Bacillus anthracis (strain CDC 684 / NRRL 3495).